Consider the following 379-residue polypeptide: 1-deoxy-D-xylulose 5-phosphate reductoisomerase (379 aa).

Positions 10, 11, 12, 13, 39, and 121 each coordinate NADPH. Position 122 (lysine 122) interacts with 1-deoxy-D-xylulose 5-phosphate. Residue glutamate 123 coordinates NADPH. A Mn(2+)-binding site is contributed by aspartate 147. Residues serine 148, glutamate 149, serine 173, and histidine 196 each contribute to the 1-deoxy-D-xylulose 5-phosphate site. Residue glutamate 149 coordinates Mn(2+). Residue glycine 202 coordinates NADPH. 1-deoxy-D-xylulose 5-phosphate is bound by residues serine 209, asparagine 214, lysine 215, and glutamate 218. Glutamate 218 contributes to the Mn(2+) binding site.

The protein belongs to the DXR family. Requires Mg(2+) as cofactor. The cofactor is Mn(2+).

It carries out the reaction 2-C-methyl-D-erythritol 4-phosphate + NADP(+) = 1-deoxy-D-xylulose 5-phosphate + NADPH + H(+). The protein operates within isoprenoid biosynthesis; isopentenyl diphosphate biosynthesis via DXP pathway; isopentenyl diphosphate from 1-deoxy-D-xylulose 5-phosphate: step 1/6. Functionally, catalyzes the NADPH-dependent rearrangement and reduction of 1-deoxy-D-xylulose-5-phosphate (DXP) to 2-C-methyl-D-erythritol 4-phosphate (MEP). The protein is 1-deoxy-D-xylulose 5-phosphate reductoisomerase of Chlamydia pneumoniae (Chlamydophila pneumoniae).